The primary structure comprises 158 residues: Endoribonuclease YbeY (158 aa).

Zn(2+) contacts are provided by His-114, His-118, and His-124.

This sequence belongs to the endoribonuclease YbeY family. Requires Zn(2+) as cofactor.

The protein localises to the cytoplasm. In terms of biological role, single strand-specific metallo-endoribonuclease involved in late-stage 70S ribosome quality control and in maturation of the 3' terminus of the 16S rRNA. The protein is Endoribonuclease YbeY of Legionella pneumophila (strain Paris).